The primary structure comprises 134 residues: L-ectoine synthase (134 aa).

The protein belongs to the ectoine synthase family.

The catalysed reaction is (2S)-4-acetamido-2-aminobutanoate = L-ectoine + H2O. Its pathway is amine and polyamine biosynthesis; ectoine biosynthesis; L-ectoine from L-aspartate 4-semialdehyde: step 3/3. In terms of biological role, catalyzes the circularization of gamma-N-acetyl-alpha,gamma-diaminobutyric acid (ADABA) to ectoine (1,4,5,6-tetrahydro-2-methyl-4-pyrimidine carboxylic acid), which is an excellent osmoprotectant. The chain is L-ectoine synthase (ectC) from Sporosarcina pasteurii (Bacillus pasteurii).